The sequence spans 99 residues: uncharacterized protein (99 aa).

This is an uncharacterized protein from Saccharomyces cerevisiae (strain ATCC 204508 / S288c) (Baker's yeast).